The sequence spans 760 residues: MRYNQFSYIPTSLERAAEELKELGFDLDLQKTAKANLESFLRKLFFHYPDSDYPLSHLIAKNDMDALSFFQSEQELSKEVFDLLALQVLGFIPGVDFTEADAFLDKLAFPIHFDETEIIKHIHHLLATRCKSGMTLIDDLVSQGMLTMDNDYHFFNGKSLATFDTSQLIREVVYVEAPLDTDQDGQLDLIKVNIIRPQSQKPLPTLMTPSPYHQGINEVANDKKLYRMEKELVVKKRRQITVEDRDFIPLETQPCKLPIGQNLESFSYINSYSLNDYFLARGFANIYVSGVGTAGSTGFMTSGDYAQIESFKAVIDWLNRRATAYTSHSKTHQVRADWANGLVCTTGKSYLGTMSTGLATTGVDGLAMIIAESAISSWYNYYRENGLVCSPGGYPGEDLDVLTELTYSRNLLAGDYLRHNDRYQELLNQQSQALDRQSGDYNQFWHDRNYLKNAHQIKCDVVYTHGLQDWNVKPRQVYEIFNALPSTINKHLFLHQGEHVYMHNWQSIDFRESMNALLCQKLLGLANDFSLPEMIWQDNTCPQNWQERKVFGTSTIKELDLGQELLLIDNHYGEDEFKAYGKDFRAFKAALFEGKANQALVDILLEEDLPINGEIVLQLKVKSSENKGLLSAQILDYGKKKRLGDLPIALTQSSIDNGQNFSRESLKELPFREDSYRVISKGFMNLQNRNNLSSIETIPNNKWMTVRLPLQPTIYHLEKGDTLRVILYTTDFEHTVRDNSNYALTIDLSQSQLIVPIASN.

Active-site charge relay system residues include Ser349, Asp469, and His499.

It belongs to the peptidase S15 family. Homodimer.

Its subcellular location is the cytoplasm. It catalyses the reaction Hydrolyzes Xaa-Pro-|- bonds to release unblocked, N-terminal dipeptides from substrates including Ala-Pro-|-p-nitroanilide and (sequentially) Tyr-Pro-|-Phe-Pro-|-Gly-Pro-|-Ile.. Its function is as follows. Removes N-terminal dipeptides sequentially from polypeptides having unsubstituted N-termini provided that the penultimate residue is proline. This chain is Xaa-Pro dipeptidyl-peptidase, found in Streptococcus pyogenes serotype M18 (strain MGAS8232).